The chain runs to 115 residues: Large ribosomal subunit protein bL19 (115 aa).

This sequence belongs to the bacterial ribosomal protein bL19 family.

Its function is as follows. This protein is located at the 30S-50S ribosomal subunit interface and may play a role in the structure and function of the aminoacyl-tRNA binding site. In Desulforamulus reducens (strain ATCC BAA-1160 / DSM 100696 / MI-1) (Desulfotomaculum reducens), this protein is Large ribosomal subunit protein bL19.